Consider the following 142-residue polypeptide: Prefoldin subunit alpha (142 aa).

This sequence belongs to the prefoldin subunit alpha family. As to quaternary structure, heterohexamer of two alpha and four beta subunits.

The protein localises to the cytoplasm. Molecular chaperone capable of stabilizing a range of proteins. Seems to fulfill an ATP-independent, HSP70-like function in archaeal de novo protein folding. The sequence is that of Prefoldin subunit alpha from Methanosarcina mazei (strain ATCC BAA-159 / DSM 3647 / Goe1 / Go1 / JCM 11833 / OCM 88) (Methanosarcina frisia).